We begin with the raw amino-acid sequence, 373 residues long: Protein SENSITIVE TO PROTON RHIZOTOXICITY 2 (373 aa).

2 C2H2-type zinc fingers span residues 217 to 239 (HYCQICGKGFKRDANLRMHMRAH) and 327 to 362 (KHCGDIKWVCSCGTKFSRKDKLMSHVSLFLGHVPAH).

In terms of tissue distribution, expressed at low levels in roots (e.g. root tips and lateral roots), leaves (e.g. at the edge of mature leaves, possibly in hydathodes, and in vascular bundles), flowers (e.g. floral filaments), stems, siliques and cotyledons.

The protein localises to the nucleus. Its function is as follows. Probable transcription factor. Together with STOP1, plays a critical role in tolerance to major stress factors in acid soils such as proton H(+) and aluminum ion Al(3+). Required for the expression of genes in response to acidic stress (e.g. ALMT1 and MATE), and Al-activated citrate exudation. The sequence is that of Protein SENSITIVE TO PROTON RHIZOTOXICITY 2 from Arabidopsis thaliana (Mouse-ear cress).